Here is a 150-residue protein sequence, read N- to C-terminus: Cell division protein SepF (150 aa).

It belongs to the SepF family. As to quaternary structure, homodimer. Interacts with FtsZ.

The protein resides in the cytoplasm. Cell division protein that is part of the divisome complex and is recruited early to the Z-ring. Probably stimulates Z-ring formation, perhaps through the cross-linking of FtsZ protofilaments. Its function overlaps with FtsA. The protein is Cell division protein SepF of Clostridium kluyveri (strain NBRC 12016).